Here is a 282-residue protein sequence, read N- to C-terminus: Elongation factor Ts (282 aa).

The interval 80 to 83 (TDFV) is involved in Mg(2+) ion dislocation from EF-Tu.

This sequence belongs to the EF-Ts family.

Its subcellular location is the cytoplasm. Functionally, associates with the EF-Tu.GDP complex and induces the exchange of GDP to GTP. It remains bound to the aminoacyl-tRNA.EF-Tu.GTP complex up to the GTP hydrolysis stage on the ribosome. In Chlamydia trachomatis serovar D (strain ATCC VR-885 / DSM 19411 / UW-3/Cx), this protein is Elongation factor Ts (tsf).